A 558-amino-acid chain; its full sequence is uncharacterized protein (558 aa).

Residues 531 to 558 (NEDDGTSASPTAMTFDMPPEHPFYSHYR) are disordered.

This is an uncharacterized protein from Saccharomyces cerevisiae (strain ATCC 204508 / S288c) (Baker's yeast).